The chain runs to 350 residues: tRNA N6-adenosine threonylcarbamoyltransferase (350 aa).

Fe cation is bound by residues histidine 117 and histidine 121. Substrate contacts are provided by residues leucine 140–glycine 144, aspartate 173, glycine 186, and asparagine 277. Aspartate 305 lines the Fe cation pocket.

This sequence belongs to the KAE1 / TsaD family. Requires Fe(2+) as cofactor.

It is found in the cytoplasm. The catalysed reaction is L-threonylcarbamoyladenylate + adenosine(37) in tRNA = N(6)-L-threonylcarbamoyladenosine(37) in tRNA + AMP + H(+). Required for the formation of a threonylcarbamoyl group on adenosine at position 37 (t(6)A37) in tRNAs that read codons beginning with adenine. Is involved in the transfer of the threonylcarbamoyl moiety of threonylcarbamoyl-AMP (TC-AMP) to the N6 group of A37, together with TsaE and TsaB. TsaD likely plays a direct catalytic role in this reaction. This is tRNA N6-adenosine threonylcarbamoyltransferase from Novosphingobium aromaticivorans (strain ATCC 700278 / DSM 12444 / CCUG 56034 / CIP 105152 / NBRC 16084 / F199).